The primary structure comprises 41 residues: Histone H3.2 (41 aa).

Positions 1–41 (MARAKQTARKSTGAEAPRKQLASKAARKSAPATGGIKKPHR) are disordered.

This sequence belongs to the histone H3 family. In terms of assembly, the nucleosome is a histone octamer containing two molecules each of H2A, H2B, H3 and H4 assembled in one H3-H4 heterotetramer and two H2A-H2B heterodimers. The octamer wraps approximately 147 bp of DNA.

It is found in the nucleus. The protein localises to the chromosome. In terms of biological role, core component of nucleosome. Nucleosomes wrap and compact DNA into chromatin, limiting DNA accessibility to the cellular machineries which require DNA as a template. Histones thereby play a central role in transcription regulation, DNA repair, DNA replication and chromosomal stability. DNA accessibility is regulated via a complex set of post-translational modifications of histones, also called histone code, and nucleosome remodeling. This is Histone H3.2 from Tetrahymena borealis.